The primary structure comprises 427 residues: Histidine--tRNA ligase (427 aa).

This sequence belongs to the class-II aminoacyl-tRNA synthetase family. Homodimer.

It localises to the cytoplasm. It catalyses the reaction tRNA(His) + L-histidine + ATP = L-histidyl-tRNA(His) + AMP + diphosphate + H(+). The polypeptide is Histidine--tRNA ligase (Deinococcus radiodurans (strain ATCC 13939 / DSM 20539 / JCM 16871 / CCUG 27074 / LMG 4051 / NBRC 15346 / NCIMB 9279 / VKM B-1422 / R1)).